A 240-amino-acid chain; its full sequence is Large ribosomal subunit protein uL2 (240 aa).

The segment covering 1–11 (MGKRLISQNRG) has biased composition (polar residues). Disordered regions lie at residues 1–25 (MGKRLISQNRGRGTPKYRSPTHKRK) and 207–240 (GGRHQHIGKPSSVSRHTSPGRKVGHIASRRTGKR). Composition is skewed to basic residues over residues 13-25 (GTPKYRSPTHKRK) and 224-240 (SPGRKVGHIASRRTGKR).

Belongs to the universal ribosomal protein uL2 family. Part of the 50S ribosomal subunit. Forms a bridge to the 30S subunit in the 70S ribosome.

In terms of biological role, one of the primary rRNA binding proteins. Required for association of the 30S and 50S subunits to form the 70S ribosome, for tRNA binding and peptide bond formation. It has been suggested to have peptidyltransferase activity; this is somewhat controversial. Makes several contacts with the 16S rRNA in the 70S ribosome. The protein is Large ribosomal subunit protein uL2 of Methanococcus maripaludis (strain DSM 14266 / JCM 13030 / NBRC 101832 / S2 / LL).